We begin with the raw amino-acid sequence, 502 residues long: Maturase K (502 aa).

The protein belongs to the intron maturase 2 family. MatK subfamily.

It is found in the plastid. Its subcellular location is the chloroplast. Its function is as follows. Usually encoded in the trnK tRNA gene intron. Probably assists in splicing its own and other chloroplast group II introns. The chain is Maturase K from Fremontodendron californicum (California flannelbush).